Consider the following 528-residue polypeptide: DnaJ homolog 1, mitochondrial (528 aa).

Residues 1 to 66 (MFSKYLQSRV…REFSRCAALK (66 aa)) constitute a mitochondrion transit peptide. The region spanning 86-150 (DPYKTLGVSK…KKKKAFDTYG (65 aa)) is the J domain. A CR-type zinc finger spans residues 227–308 (GAKKDLSYSV…CMGSGTVRER (82 aa)). CXXCXGXG motif repeat units lie at residues 240 to 247 (CSSCHGSG), 257 to 264 (CFACKGTG), 280 to 287 (CDSCGGTG), and 296 to 303 (CRSCMGSG). The disordered stretch occupies residues 455 to 528 (NDSTARRTQS…QNPKKDESSS (74 aa)). A compositionally biased stretch (low complexity) spans 462-488 (TQSSPSGTNSSTSTSSTSSKHSTGIST). The span at 513–528 (LHPDEDQNPKKDESSS) shows a compositional bias: basic and acidic residues.

The protein resides in the mitochondrion. In Schizosaccharomyces pombe (strain 972 / ATCC 24843) (Fission yeast), this protein is DnaJ homolog 1, mitochondrial (mdj1).